The sequence spans 165 residues: Type 3 secretion system regulator YopR (165 aa).

The interval 2–11 (TVTLNRGSIT) is 5' secretion signal. Residues 131 to 149 (PYLSELINKELMILLPYNS) form a 3' secretion signal region.

It belongs to the YopR family.

The protein localises to the secreted. In terms of biological role, may be involved in the regulation of the assembly of the type III secretion system (T3SS), also called injectisome, which is used to inject bacterial effector proteins into eukaryotic host cells. May control the secretion and/or polymerization of YscF/SctF, the principal component of the needle filament, thereby impacting the assembly of the T3SS. Involved in pathogenesis. Essential for the establishment of Yersinia infections in a mouse model system. The protein is Type 3 secretion system regulator YopR of Yersinia enterocolitica.